The sequence spans 369 residues: Histidinol-phosphate aminotransferase (369 aa).

Position 222 is an N6-(pyridoxal phosphate)lysine (Lys222).

The protein belongs to the class-II pyridoxal-phosphate-dependent aminotransferase family. Histidinol-phosphate aminotransferase subfamily. In terms of assembly, homodimer. Pyridoxal 5'-phosphate serves as cofactor.

It carries out the reaction L-histidinol phosphate + 2-oxoglutarate = 3-(imidazol-4-yl)-2-oxopropyl phosphate + L-glutamate. It functions in the pathway amino-acid biosynthesis; L-histidine biosynthesis; L-histidine from 5-phospho-alpha-D-ribose 1-diphosphate: step 7/9. In Halalkalibacterium halodurans (strain ATCC BAA-125 / DSM 18197 / FERM 7344 / JCM 9153 / C-125) (Bacillus halodurans), this protein is Histidinol-phosphate aminotransferase.